The sequence spans 192 residues: Thymidylate kinase (192 aa).

Residue 7-14 participates in ATP binding; the sequence is GVDGVGKS.

It belongs to the thymidylate kinase family.

It catalyses the reaction dTMP + ATP = dTDP + ADP. In terms of biological role, phosphorylation of dTMP to form dTDP in both de novo and salvage pathways of dTTP synthesis. The chain is Thymidylate kinase from Campylobacter fetus subsp. fetus (strain 82-40).